The primary structure comprises 298 residues: Type II methyltransferase M.MjaIV (298 aa).

It catalyses the reaction a 2'-deoxyadenosine in DNA + S-adenosyl-L-methionine = an N(6)-methyl-2'-deoxyadenosine in DNA + S-adenosyl-L-homocysteine + H(+). Functionally, a methylase that recognizes the double-stranded sequence 5'-GTNNAC-3', methylates A-5 on both strands, and protects the DNA from cleavage by the MjaIV endonuclease. The polypeptide is Type II methyltransferase M.MjaIV (mjaIVMP) (Methanocaldococcus jannaschii (strain ATCC 43067 / DSM 2661 / JAL-1 / JCM 10045 / NBRC 100440) (Methanococcus jannaschii)).